The following is a 391-amino-acid chain: Chaperone protein DnaJ (391 aa).

The J domain maps to 2 to 67 (DYYDVLGVSK…QKRESYDRYG (66 aa)). Residues 148–226 (GVKKELLVSG…CRGQGRIKDK (79 aa)) form a CR-type zinc finger. Residues Cys-161, Cys-164, Cys-178, Cys-181, Cys-200, Cys-203, Cys-214, and Cys-217 each coordinate Zn(2+). CXXCXGXG motif repeat units follow at residues 161–168 (CETCSGSG), 178–185 (CDRCKGSG), 200–207 (CPECGGEG), and 214–221 (CSSCRGQG).

This sequence belongs to the DnaJ family. In terms of assembly, homodimer. It depends on Zn(2+) as a cofactor.

Its subcellular location is the cytoplasm. Functionally, participates actively in the response to hyperosmotic and heat shock by preventing the aggregation of stress-denatured proteins and by disaggregating proteins, also in an autonomous, DnaK-independent fashion. Unfolded proteins bind initially to DnaJ; upon interaction with the DnaJ-bound protein, DnaK hydrolyzes its bound ATP, resulting in the formation of a stable complex. GrpE releases ADP from DnaK; ATP binding to DnaK triggers the release of the substrate protein, thus completing the reaction cycle. Several rounds of ATP-dependent interactions between DnaJ, DnaK and GrpE are required for fully efficient folding. Also involved, together with DnaK and GrpE, in the DNA replication of plasmids through activation of initiation proteins. The chain is Chaperone protein DnaJ from Chlamydia abortus (strain DSM 27085 / S26/3) (Chlamydophila abortus).